Consider the following 956-residue polypeptide: Glycine dehydrogenase (decarboxylating) (956 aa).

At Lys697 the chain carries N6-(pyridoxal phosphate)lysine.

Belongs to the GcvP family. As to quaternary structure, the glycine cleavage system is composed of four proteins: P, T, L and H. It depends on pyridoxal 5'-phosphate as a cofactor.

The enzyme catalyses N(6)-[(R)-lipoyl]-L-lysyl-[glycine-cleavage complex H protein] + glycine + H(+) = N(6)-[(R)-S(8)-aminomethyldihydrolipoyl]-L-lysyl-[glycine-cleavage complex H protein] + CO2. Functionally, the glycine cleavage system catalyzes the degradation of glycine. The P protein binds the alpha-amino group of glycine through its pyridoxal phosphate cofactor; CO(2) is released and the remaining methylamine moiety is then transferred to the lipoamide cofactor of the H protein. This chain is Glycine dehydrogenase (decarboxylating), found in Cereibacter sphaeroides (strain KD131 / KCTC 12085) (Rhodobacter sphaeroides).